We begin with the raw amino-acid sequence, 183 residues long: uncharacterized protein (183 aa).

Belongs to the asfivirus S183L family.

This is an uncharacterized protein from Ornithodoros (relapsing fever ticks).